The sequence spans 327 residues: Porphobilinogen deaminase (327 aa).

C250 is subject to S-(dipyrrolylmethanemethyl)cysteine.

Belongs to the HMBS family. As to quaternary structure, monomer. Dipyrromethane serves as cofactor.

The enzyme catalyses 4 porphobilinogen + H2O = hydroxymethylbilane + 4 NH4(+). The protein operates within porphyrin-containing compound metabolism; protoporphyrin-IX biosynthesis; coproporphyrinogen-III from 5-aminolevulinate: step 2/4. Its function is as follows. Tetrapolymerization of the monopyrrole PBG into the hydroxymethylbilane pre-uroporphyrinogen in several discrete steps. This is Porphobilinogen deaminase from Paraburkholderia phymatum (strain DSM 17167 / CIP 108236 / LMG 21445 / STM815) (Burkholderia phymatum).